The following is an 81-amino-acid chain: MMFRLTSVWCLLVIVLLNSAVDGFIPCTGSEGYCHSHMWCCNSFDVCCELPGPATCTREEACETLRIALGRRAQYKRFFRR.

Positions 1 to 23 (MMFRLTSVWCLLVIVLLNSAVDG) are cleaved as a signal peptide. 4 disulfides stabilise this stretch: Cys27-Cys41, Cys34-Cys48, Cys40-Cys56, and Cys47-Cys62. Position 69 is a leucine amide (Leu69). The propeptide occupies 73–81 (AQYKRFFRR).

It belongs to the conotoxin I2 superfamily. Expressed by the venom duct.

It is found in the secreted. This is Conotoxin Eb11.3 from Conus eburneus (Ivory cone).